Reading from the N-terminus, the 146-residue chain is Large ribosomal subunit protein uL11 (146 aa).

Belongs to the universal ribosomal protein uL11 family. As to quaternary structure, part of the ribosomal stalk of the 50S ribosomal subunit. Interacts with L10 and the large rRNA to form the base of the stalk. L10 forms an elongated spine to which L12 dimers bind in a sequential fashion forming a multimeric L10(L12)X complex. Post-translationally, one or more lysine residues are methylated.

In terms of biological role, forms part of the ribosomal stalk which helps the ribosome interact with GTP-bound translation factors. The polypeptide is Large ribosomal subunit protein uL11 (Wolbachia pipientis wMel).